The following is a 1150-amino-acid chain: Cell division cycle and apoptosis regulator protein 1 (1150 aa).

Positions 1 to 249 are interaction with AR; it reads MAQFGGQKNP…TQPQPQSLLQ (249 aa). Disordered regions lie at residues 124 to 146 and 285 to 354; these read PTAQ…QPQK and IVSQ…SPRR. Residues 134–146 show a composition bias toward low complexity; the sequence is TPRSSQQQTQPQK. The interval 203–660 is interaction with GATA2; that stretch reads QRIQTLPNQN…RALSSKGLKS (458 aa). Composition is skewed to basic and acidic residues over residues 293 to 334 and 341 to 352; these read RRLD…ERSP and ERSPRRERERSP. Residue Ser456 is modified to Phosphoserine. A coiled-coil region spans residues 594–618; the sequence is KQQLVEKLQGERKEADGEQDEEEKD. The segment at 600-638 is disordered; sequence KLQGERKEADGEQDEEEKDDGEAKEISTPTHWSKLDPKT. A compositionally biased stretch (acidic residues) spans 610–621; it reads GEQDEEEKDDGE. Thr627 carries the phosphothreonine modification. The SAP domain occupies 636–670; sequence PKTMKVNDLRKELESRALSSKGLKSQLIARLTKQL. Lys637 participates in a covalent cross-link: Glycyl lysine isopeptide (Lys-Gly) (interchain with G-Cter in ubiquitin). The interaction with GATA1 stretch occupies residues 643 to 1150; the sequence is DLRKELESRA…QKSKENGASV (508 aa). A Phosphothreonine modification is found at Thr667. Basic and acidic residues-rich tracts occupy residues 673–687, 694–713, 796–817, and 832–855; these read EEQK…KSEK, DRKS…EEIE, KEDK…KKEE, and SGDD…KDDS. 2 disordered regions span residues 673–713 and 796–915; these read EEQK…EEIE and KEDK…EKEK. Residues Ser685 and Ser697 each carry the phosphoserine modification. Residues 856-889 are compositionally biased toward acidic residues; that stretch reads KDDDETEEDNNQDEYDPMEAEEAEDEEDDRDEEE. Thr861 carries the phosphothreonine modification. Residues 890–915 are compositionally biased toward basic and acidic residues; it reads MTKRDDKRDINRYCKERPSKDKEKEK. A Glycyl lysine isopeptide (Lys-Gly) (interchain with G-Cter in SUMO1); alternate cross-link involves residue Lys1012. Residue Lys1012 forms a Glycyl lysine isopeptide (Lys-Gly) (interchain with G-Cter in SUMO2); alternate linkage. The stretch at 1033–1114 forms a coiled coil; the sequence is DVGSLLQKLE…LQFENQMNKT (82 aa). Glycyl lysine isopeptide (Lys-Gly) (interchain with G-Cter in SUMO2) cross-links involve residues Lys1067 and Lys1135.

In terms of assembly, directly interacts with ESR1, NR3C1 and p53/TP53. Interacts (via N-terminus) with CALCOCO1. Interacts with MED1. Interacts with GATA1. Interacts with AR and GATA2. As to expression, expressed in various epithelial cancer cell lines, including breast, colon, prostate, pancreatic and leukemia. Expression is regulated by growth factors.

The protein localises to the cytoplasm. It is found in the perinuclear region. Associates with components of the Mediator and p160 coactivator complexes that play a role as intermediaries transducing regulatory signals from upstream transcriptional activator proteins to basal transcription machinery at the core promoter. Recruited to endogenous nuclear receptor target genes in response to the appropriate hormone. Also functions as a p53 coactivator. May thus play an important role in transcriptional regulation. May be involved in apoptosis signaling in the presence of the reinoid CD437. Apoptosis induction involves sequestration of 14-3-3 protein(s) and mediated altered expression of multiple cell cycle regulatory genes including MYC, CCNB1 and CDKN1A. Plays a role in cell cycle progression and/or cell proliferation. In association with CALCOCO1 enhances GATA1- and MED1-mediated transcriptional activation from the gamma-globin promoter during erythroid differentiation of K562 erythroleukemia cells. Can act as a both a coactivator and corepressor of AR-mediated transcription. Contributes to chromatin looping and AR transcription complex assembly by stabilizing AR-GATA2 association on chromatin and facilitating MED1 and RNA polymerase II recruitment to AR-binding sites. May play an important role in the growth and tumorigenesis of prostate cancer cells. The polypeptide is Cell division cycle and apoptosis regulator protein 1 (CCAR1) (Homo sapiens (Human)).